The following is a 408-amino-acid chain: RNA-splicing ligase RtcB (408 aa).

Residues Asp75, Cys78, His168, His185, and His281 each contribute to the Mn(2+) site. 167-171 (NHFIE) lines the GMP pocket. GMP-binding positions include 281-282 (HN), 313-316 (PGSM), Ser320, 337-340 (HGAG), and Lys407. His337 functions as the GMP-histidine intermediate in the catalytic mechanism.

It belongs to the RtcB family. As to quaternary structure, monomer. The cofactor is Mn(2+).

It catalyses the reaction a 3'-end 3'-phospho-ribonucleotide-RNA + a 5'-end dephospho-ribonucleoside-RNA + GTP = a ribonucleotidyl-ribonucleotide-RNA + GMP + diphosphate. The catalysed reaction is a 3'-end 2',3'-cyclophospho-ribonucleotide-RNA + a 5'-end dephospho-ribonucleoside-RNA + GTP + H2O = a ribonucleotidyl-ribonucleotide-RNA + GMP + diphosphate + H(+). Functionally, GTP-dependent RNA ligase that is involved in RNA repair. Joins RNA with 2',3'-cyclic-phosphate or 3'-phosphate ends to RNA with 5'-hydroxy ends. Also acts as a DNA ligase in case of DNA damage by splicing 'dirty' DNA breaks, characterized by 3'-phosphate (or cyclic-phosphate) and 5'-hydroxy ends that cannot be sealed by classical DNA ligases. Repairs tRNA cleaved by colicins D or E5, does not repair damaged 16S rRNA. Its function is as follows. Able to catalyze tRNA splicing in vivo in yeast, but bacteria are not known to splice tRNA. The polypeptide is RNA-splicing ligase RtcB (Escherichia coli (strain K12)).